The primary structure comprises 1385 residues: DNA-directed RNA polymerase subunit beta (1385 aa).

It belongs to the RNA polymerase beta chain family. The RNAP catalytic core consists of 2 alpha, 1 beta, 1 beta' and 1 omega subunit. When a sigma factor is associated with the core the holoenzyme is formed, which can initiate transcription.

It catalyses the reaction RNA(n) + a ribonucleoside 5'-triphosphate = RNA(n+1) + diphosphate. Its function is as follows. DNA-dependent RNA polymerase catalyzes the transcription of DNA into RNA using the four ribonucleoside triphosphates as substrates. This Jannaschia sp. (strain CCS1) protein is DNA-directed RNA polymerase subunit beta.